The following is an 85-amino-acid chain: Large ribosomal subunit protein bL27 (85 aa).

Residues 1–22 (MAHKKAGGSTKNGRDSESKRLG) are disordered.

The protein belongs to the bacterial ribosomal protein bL27 family.

This is Large ribosomal subunit protein bL27 from Idiomarina loihiensis (strain ATCC BAA-735 / DSM 15497 / L2-TR).